The chain runs to 189 residues: dTTP/UTP pyrophosphatase (189 aa).

The active-site Proton acceptor is Asp-70. Cys-74 and Cys-79 are oxidised to a cystine.

It belongs to the Maf family. YhdE subfamily. Homodimer. A divalent metal cation serves as cofactor.

The protein resides in the cytoplasm. The enzyme catalyses dTTP + H2O = dTMP + diphosphate + H(+). It catalyses the reaction UTP + H2O = UMP + diphosphate + H(+). It carries out the reaction CTP + H2O = CMP + diphosphate + H(+). The catalysed reaction is psi-UTP + H2O = psi-UMP + diphosphate + H(+). The enzyme catalyses 5-methyl-CTP + H2O = 5-methyl-CMP + diphosphate + H(+). It catalyses the reaction 5-methyl-UTP + H2O = 5-methyl-UMP + diphosphate + H(+). Its function is as follows. Nucleoside triphosphate pyrophosphatase that hydrolyzes dTTP and UTP. Can also hydrolyze CTP and the modified nucleotides pseudo-UTP, 5-methyl-CTP (m(5)CTP) and 5-methyl-UTP (m(5)UTP). May have a dual role in cell division arrest and in preventing the incorporation of modified nucleotides into cellular nucleic acids. The chain is dTTP/UTP pyrophosphatase from Bacillus subtilis (strain 168).